We begin with the raw amino-acid sequence, 404 residues long: Propionate kinase (404 aa).

The protein belongs to the acetokinase family. PduW subfamily.

The protein localises to the cytoplasm. It catalyses the reaction propanoate + ATP = propanoyl phosphate + ADP. It participates in polyol metabolism; 1,2-propanediol degradation. In terms of biological role, works with phosphate acetyltransferase (pta) to capture exogenous propionate and regenerate propionyl-CoA during degradation of 1,2-propanediol (1,2-PD). The protein is Propionate kinase of Escherichia fergusonii (strain ATCC 35469 / DSM 13698 / CCUG 18766 / IAM 14443 / JCM 21226 / LMG 7866 / NBRC 102419 / NCTC 12128 / CDC 0568-73).